The chain runs to 78 residues: Putative DPH3 homolog B (78 aa).

Positions Phe-4 to Asp-60 constitute a DPH-type MB domain. Cys-26, Cys-28, Cys-48, and Cys-51 together coordinate Zn(2+).

Belongs to the DPH3 family.

The polypeptide is Putative DPH3 homolog B (DPH3P1) (Homo sapiens (Human)).